Reading from the N-terminus, the 122-residue chain is Small ribosomal subunit protein uS13 (122 aa).

Residues 95–122 (SLPCRGQRTSTNARTRKGPKRAAVKKKK) are disordered. A compositionally biased stretch (basic residues) spans 108 to 122 (RTRKGPKRAAVKKKK).

It belongs to the universal ribosomal protein uS13 family. In terms of assembly, part of the 30S ribosomal subunit. Forms a loose heterodimer with protein S19. Forms two bridges to the 50S subunit in the 70S ribosome.

Functionally, located at the top of the head of the 30S subunit, it contacts several helices of the 16S rRNA. In the 70S ribosome it contacts the 23S rRNA (bridge B1a) and protein L5 of the 50S subunit (bridge B1b), connecting the 2 subunits; these bridges are implicated in subunit movement. Contacts the tRNAs in the A and P-sites. The polypeptide is Small ribosomal subunit protein uS13 (Desulforapulum autotrophicum (strain ATCC 43914 / DSM 3382 / VKM B-1955 / HRM2) (Desulfobacterium autotrophicum)).